The primary structure comprises 85 residues: RDS3 complex subunit 10 (85 aa).

Belongs to the SF3b complex composed of CUS1, HSH49, HSH155, RCP1, RDS3 and RSE1.

It localises to the nucleus. Its function is as follows. Involved in pre-mRNA splicing. Required for the SF3b integrity and prespliceosome assembly. The chain is RDS3 complex subunit 10 (YSF3) from Saccharomyces cerevisiae (strain ATCC 204508 / S288c) (Baker's yeast).